Consider the following 120-residue polypeptide: Phosphoribosyl-ATP pyrophosphatase (120 aa).

It belongs to the PRA-PH family.

The protein resides in the cytoplasm. The catalysed reaction is 1-(5-phospho-beta-D-ribosyl)-ATP + H2O = 1-(5-phospho-beta-D-ribosyl)-5'-AMP + diphosphate + H(+). Its pathway is amino-acid biosynthesis; L-histidine biosynthesis; L-histidine from 5-phospho-alpha-D-ribose 1-diphosphate: step 2/9. The polypeptide is Phosphoribosyl-ATP pyrophosphatase (Methylibium petroleiphilum (strain ATCC BAA-1232 / LMG 22953 / PM1)).